Reading from the N-terminus, the 382-residue chain is Galactokinase (382 aa).

A substrate-binding site is contributed by 34-37 (EHTD). 124-130 (GAGLSSS) lines the ATP pocket. Residues Ser130 and Glu162 each coordinate Mg(2+). Asp174 acts as the Proton acceptor in catalysis. Residue Tyr223 participates in substrate binding.

The protein belongs to the GHMP kinase family. GalK subfamily.

The protein resides in the cytoplasm. It catalyses the reaction alpha-D-galactose + ATP = alpha-D-galactose 1-phosphate + ADP + H(+). It functions in the pathway carbohydrate metabolism; galactose metabolism. Catalyzes the transfer of the gamma-phosphate of ATP to D-galactose to form alpha-D-galactose-1-phosphate (Gal-1-P). In Erwinia tasmaniensis (strain DSM 17950 / CFBP 7177 / CIP 109463 / NCPPB 4357 / Et1/99), this protein is Galactokinase.